A 481-amino-acid polypeptide reads, in one-letter code: MKKVELVFIPSPGAGHLVPTLQFAKRLIDRNDRISITILAIQSYFPTTLSSYTKSIAASEPRIRFIDVPQPQDRPPQEMYKSPAKFFSLYIESQVPSVKKIITNLVSSSANSSDSIRVAALVVDLFCVSMIDVAKELNIPSYLFLTSNAGYLAFMLHLPIVNEKNQIAVEESDPEWSIPGIVHPVPPRVFPVALTDGRCSAYIKLASRFRETRGIIVNTFVELETHAITLFSTDDGIPPVYPVGPVIDMDDGQAHSNLDQAQRDRIIKWLDDQPQKSVVFLCFGSMGSFRAEQVKEIALGLEQSGQRFLWSLRMPSPIGTVPCDCSNLEEVLPDGFLERTNGKKGLICGWAPQVEILAHSATGGFLSHCGWNSILESLWHGVPITTWPMYAEQQLNAFRMARELGMALEMRLDYKRGSADVVGADEIERAVVGVMEKDSEVRKKVEEMGKMARKAVKDGGSSFASVGRFIEDVIGENSGFK.

UDP-alpha-D-glucose-binding positions include Ser285, 350–351, 368–376, and 390–393; these read WA, HCGWNSILE, and YAEQ.

The protein belongs to the UDP-glycosyltransferase family.

In terms of biological role, glycosyltransferase that possesses chalcone and flavonol 2'-O-glycosyltransferase activity. Converts phloretin to phlorizin (phloretin 2'-O-glucoside), a potent antioxidant. Possesses glycosyltransferase activity toward quercetin, isoliquiritigenin, butein and caffeic acid. The polypeptide is UDP-glycosyltransferase 71K2 (Pyrus communis (Pear)).